Consider the following 392-residue polypeptide: MKFSLISSCVALAVLVLSTEAAPNGKKVNIPLTKNKDYKPNAKNAIQKVLAKYHRHRSTSSSSNSTSTDGIGRVPVTDYYNDIEYFGQVKVGTPGVTLKLDFDTGSSDLWFASSLCTNCGYSQTKYNPNQSRTYAKDGRAWSISYGDGSSASGILGTDTVVLGGLTIQRQTIELARREASSFQNGPSDGLLGLGFNSITTVRGVKTPVDNLISQGLISNPVFGVYLGKESNGGGGEYIFGGYDSSKFKGSLTTIPVDNSNGWYGVTIRGASIGRSRVAGSFEAILDTGTSLLVLPNDVARSVASAYGARDNYDGTFSISCDTSRFQPLVFTIGSSTFEVPADSLVYEQNGYSCIAGFGYGDYDFAIFDDVFLKNNYVVFNPTVPQVQIATVA.

Residues 1 to 21 (MKFSLISSCVALAVLVLSTEA) form the signal peptide. Positions 22 to 69 (APNGKKVNIPLTKNKDYKPNAKNAIQKVLAKYHRHRSTSSSSNSTSTD) are cleaved as a propeptide — activation peptide. The 305-residue stretch at 85-389 (YFGQVKVGTP…NPTVPQVQIA (305 aa)) folds into the Peptidase A1 domain. Aspartate 103 is an active-site residue. An intrachain disulfide couples cysteine 116 to cysteine 119. Aspartate 286 is a catalytic residue. Cysteine 320 and cysteine 353 are oxidised to a cystine.

Belongs to the peptidase A1 family.

The catalysed reaction is Hydrolysis of proteins with broad specificity similar to that of pepsin A, preferring hydrophobic residues at P1 and P1'. Clots milk and activates trypsinogen. Does not cleave 4-Gln-|-His-5, but does cleave 10-His-|-Leu-11 and 12-Val-|-Glu-13 in B chain of insulin.. In Rhizopus niveus, this protein is Rhizopuspepsin-5.